The primary structure comprises 413 residues: Aspartate kinase (413 aa).

ACT domains are found at residues 267–341 (LTIR…GDTK) and 347–413 (IVGV…RQGE).

This sequence belongs to the aspartokinase family. As to quaternary structure, homotrimer. In the presence of inhibitory amino acids the Stokes radius of the protein increases, suggesting its oligomeric state may change.

It localises to the cytoplasm. The catalysed reaction is L-aspartate + ATP = 4-phospho-L-aspartate + ADP. It functions in the pathway amino-acid biosynthesis; L-lysine biosynthesis via DAP pathway; (S)-tetrahydrodipicolinate from L-aspartate: step 1/4. The protein operates within amino-acid biosynthesis; L-methionine biosynthesis via de novo pathway; L-homoserine from L-aspartate: step 1/3. Its pathway is amino-acid biosynthesis; L-threonine biosynthesis; L-threonine from L-aspartate: step 1/5. Its activity is regulated as follows. Activated by L-lysine, L-methionine, and L-isoleucine. L-threonine, at low concentrations, is a mild activator and has a weak inhibitory effect only at concentrations over 10 mM. Strongly feedback inhibited by the concerted combination of L-lysine and L-threonine and slightly feedback inhibited by the concerted combination of L-threonine and L-methionine. Activated by the combination of L-methionine and L-lysine, L-methionine and L-isoleucine and L-lysine and L-isoleucine. Involved in the biosynthesis of L-aspartate-beta-semialdehyde which is a central intermediate in the biosynthesis of different amino acids (L-lysine, L-methionine, L-threonine). Catalyzes the phosphorylation of the beta-carboxyl group of L-aspartate to yield 4-phospho-L-aspartate. This Pseudomonas fluorescens (strain SBW25) protein is Aspartate kinase.